A 212-amino-acid chain; its full sequence is Probable nicotinate-nucleotide adenylyltransferase (212 aa).

It belongs to the NadD family.

It carries out the reaction nicotinate beta-D-ribonucleotide + ATP + H(+) = deamido-NAD(+) + diphosphate. It participates in cofactor biosynthesis; NAD(+) biosynthesis; deamido-NAD(+) from nicotinate D-ribonucleotide: step 1/1. Functionally, catalyzes the reversible adenylation of nicotinate mononucleotide (NaMN) to nicotinic acid adenine dinucleotide (NaAD). The chain is Probable nicotinate-nucleotide adenylyltransferase from Chromobacterium violaceum (strain ATCC 12472 / DSM 30191 / JCM 1249 / CCUG 213 / NBRC 12614 / NCIMB 9131 / NCTC 9757 / MK).